The primary structure comprises 740 residues: NAD(P)H-quinone oxidoreductase subunit 5, chloroplastic (740 aa).

Helical transmembrane passes span W9–F29, W40–I60, I89–I109, F125–I145, I147–T167, G185–F205, V221–S241, T258–A278, L283–L303, L327–I347, A354–S374, T396–S416, L425–Y445, I547–P567, F606–Y626, and I718–I738.

It belongs to the complex I subunit 5 family. As to quaternary structure, NDH is composed of at least 16 different subunits, 5 of which are encoded in the nucleus.

The protein localises to the plastid. It localises to the chloroplast thylakoid membrane. The enzyme catalyses a plastoquinone + NADH + (n+1) H(+)(in) = a plastoquinol + NAD(+) + n H(+)(out). The catalysed reaction is a plastoquinone + NADPH + (n+1) H(+)(in) = a plastoquinol + NADP(+) + n H(+)(out). Functionally, NDH shuttles electrons from NAD(P)H:plastoquinone, via FMN and iron-sulfur (Fe-S) centers, to quinones in the photosynthetic chain and possibly in a chloroplast respiratory chain. The immediate electron acceptor for the enzyme in this species is believed to be plastoquinone. Couples the redox reaction to proton translocation, and thus conserves the redox energy in a proton gradient. In Aethionema grandiflorum (Persian stone-cress), this protein is NAD(P)H-quinone oxidoreductase subunit 5, chloroplastic (ndhF).